Consider the following 381-residue polypeptide: Sterol 24-C-methyltransferase ERG6A (381 aa).

This sequence belongs to the class I-like SAM-binding methyltransferase superfamily. Erg6/SMT family.

The catalysed reaction is lanosterol + S-adenosyl-L-methionine = eburicol + S-adenosyl-L-homocysteine + H(+). Its pathway is steroid metabolism; ergosterol biosynthesis. In terms of biological role, sterol 24-C-methyltransferase; part of the third module of ergosterol biosynthesis pathway that includes the late steps of the pathway. ERG6A and ERG6B methylate lanosterol at C-24 to produce eburicol. The third module or late pathway involves the ergosterol synthesis itself through consecutive reactions that mainly occur in the endoplasmic reticulum (ER) membrane. Firstly, the squalene synthase ERG9 catalyzes the condensation of 2 farnesyl pyrophosphate moieties to form squalene, which is the precursor of all steroids. Squalene synthase is crucial for balancing the incorporation of farnesyl diphosphate (FPP) into sterol and nonsterol isoprene synthesis. Secondly, squalene is converted into lanosterol by the consecutive action of the squalene epoxidase ERG1 and the lanosterol synthase ERG7. Then, the delta(24)-sterol C-methyltransferase ERG6 methylates lanosterol at C-24 to produce eburicol. Eburicol is the substrate of the sterol 14-alpha demethylase encoded by CYP51A, CYP51B and CYP51C, to yield 4,4,24-trimethyl ergosta-8,14,24(28)-trienol. CYP51B encodes the enzyme primarily responsible for sterol 14-alpha-demethylation, and plays an essential role in ascospore formation. CYP51A encodes an additional sterol 14-alpha-demethylase, induced on ergosterol depletion and responsible for the intrinsic variation in azole sensitivity. The third CYP51 isoform, CYP51C, does not encode a sterol 14-alpha-demethylase, but is required for full virulence on host wheat ears. The C-14 reductase ERG24 then reduces the C14=C15 double bond which leads to 4,4-dimethylfecosterol. A sequence of further demethylations at C-4, involving the C-4 demethylation complex containing the C-4 methylsterol oxidases ERG25, the sterol-4-alpha-carboxylate 3-dehydrogenase ERG26 and the 3-keto-steroid reductase ERG27, leads to the production of fecosterol via 4-methylfecosterol. ERG28 has a role as a scaffold to help anchor ERG25, ERG26 and ERG27 to the endoplasmic reticulum. The C-8 sterol isomerase ERG2 then catalyzes the reaction which results in unsaturation at C-7 in the B ring of sterols and thus converts fecosterol to episterol. The sterol-C5-desaturases ERG3A and ERG3BB then catalyze the introduction of a C-5 double bond in the B ring to produce 5-dehydroepisterol. The C-22 sterol desaturases ERG5A and ERG5B further convert 5-dehydroepisterol into ergosta-5,7,22,24(28)-tetraen-3beta-ol by forming the C-22(23) double bond in the sterol side chain. Finally, ergosta-5,7,22,24(28)-tetraen-3beta-ol is substrate of the C-24(28) sterol reductase ERG4 to produce ergosterol. This chain is Sterol 24-C-methyltransferase ERG6A (FG02783.1), found in Gibberella zeae (strain ATCC MYA-4620 / CBS 123657 / FGSC 9075 / NRRL 31084 / PH-1) (Wheat head blight fungus).